Here is a 342-residue protein sequence, read N- to C-terminus: MDVNEFDFDLPEELIAQTPLKTRTNSRLLVVDKKTKAISDRMFPDLIEALSPGDCLVLNDTKVMPARLLGEKVETKAVIELLLLKQLEGDCWETLVKPAKRVKIGTEVSFGDGKLTAICTAVQPQGGRIFEFRYSGVFYELLEELGTMPLPPYIKERLEDADRYQTVYAKQIGSAAAPTAGLHFSEQLLLEIEAKGVKIVYITLHVGLGTFRPVSASSVEDHQMHAEYYQVTEEAAHTLASARENGGNIIAVGTTSARTLETIYSDHGAFVAASGWTSIFIYPGYKYQAIDGLLTNFHLPKSTLVMLVSALIGKEALMDAYAHAIKERYRFFSFGDAMFIRP.

This sequence belongs to the QueA family. In terms of assembly, monomer.

Its subcellular location is the cytoplasm. It carries out the reaction 7-aminomethyl-7-carbaguanosine(34) in tRNA + S-adenosyl-L-methionine = epoxyqueuosine(34) in tRNA + adenine + L-methionine + 2 H(+). It participates in tRNA modification; tRNA-queuosine biosynthesis. Transfers and isomerizes the ribose moiety from AdoMet to the 7-aminomethyl group of 7-deazaguanine (preQ1-tRNA) to give epoxyqueuosine (oQ-tRNA). This chain is S-adenosylmethionine:tRNA ribosyltransferase-isomerase, found in Shouchella clausii (strain KSM-K16) (Alkalihalobacillus clausii).